A 590-amino-acid chain; its full sequence is Acetolactate synthase large subunit (590 aa).

Residue glutamate 61 coordinates thiamine diphosphate. FAD-binding positions include arginine 163, 271–292 (HGTAYANFAVSECDLLIALGAR), and 314–333 (DIDPAEVGKNRIPQVAIVGD). The segment at 405 to 484 (QHQMWSAQFL…VKIIIINNRW (80 aa)) is thiamine pyrophosphate binding. Residues aspartate 455 and asparagine 482 each contribute to the Mg(2+) site.

It belongs to the TPP enzyme family. As to quaternary structure, dimer of large and small chains. The cofactor is Mg(2+). Thiamine diphosphate serves as cofactor.

Its subcellular location is the plastid. It localises to the chloroplast. The catalysed reaction is 2 pyruvate + H(+) = (2S)-2-acetolactate + CO2. The protein operates within amino-acid biosynthesis; L-isoleucine biosynthesis; L-isoleucine from 2-oxobutanoate: step 1/4. It participates in amino-acid biosynthesis; L-valine biosynthesis; L-valine from pyruvate: step 1/4. The chain is Acetolactate synthase large subunit (ilvB) from Pyropia yezoensis (Susabi-nori).